A 621-amino-acid chain; its full sequence is uncharacterized protein (621 aa).

This sequence belongs to the chlamydial CPn_0512/CT_425/TC_0708 family.

This is an uncharacterized protein from Chlamydia muridarum (strain MoPn / Nigg).